The following is a 492-amino-acid chain: Probable cytochrome P450 313a3 (492 aa).

C438 provides a ligand contact to heme.

Belongs to the cytochrome P450 family. It depends on heme as a cofactor.

It localises to the endoplasmic reticulum membrane. It is found in the microsome membrane. Its function is as follows. May be involved in the metabolism of insect hormones and in the breakdown of synthetic insecticides. The protein is Probable cytochrome P450 313a3 (Cyp313a3) of Drosophila melanogaster (Fruit fly).